The following is a 72-amino-acid chain: MAKEDNIEMQGTILETLPNTMFRVELENGHVVIAHISGKMRKNYIRILTGDKVTVQLTPYDLSKGRIVFRSR.

The S1-like domain occupies 1–72 (MAKEDNIEMQ…SKGRIVFRSR (72 aa)).

It belongs to the IF-1 family. As to quaternary structure, component of the 30S ribosomal translation pre-initiation complex which assembles on the 30S ribosome in the order IF-2 and IF-3, IF-1 and N-formylmethionyl-tRNA(fMet); mRNA recruitment can occur at any time during PIC assembly.

The protein resides in the cytoplasm. In terms of biological role, one of the essential components for the initiation of protein synthesis. Stabilizes the binding of IF-2 and IF-3 on the 30S subunit to which N-formylmethionyl-tRNA(fMet) subsequently binds. Helps modulate mRNA selection, yielding the 30S pre-initiation complex (PIC). Upon addition of the 50S ribosomal subunit IF-1, IF-2 and IF-3 are released leaving the mature 70S translation initiation complex. The chain is Translation initiation factor IF-1 from Shewanella loihica (strain ATCC BAA-1088 / PV-4).